A 154-amino-acid polypeptide reads, in one-letter code: Crossover junction endodeoxyribonuclease RuvC (154 aa).

Residues aspartate 7, glutamate 66, and aspartate 139 contribute to the active site. 3 residues coordinate Mg(2+): aspartate 7, glutamate 66, and aspartate 139.

It belongs to the RuvC family. Homodimer which binds Holliday junction (HJ) DNA. The HJ becomes 2-fold symmetrical on binding to RuvC with unstacked arms; it has a different conformation from HJ DNA in complex with RuvA. In the full resolvosome a probable DNA-RuvA(4)-RuvB(12)-RuvC(2) complex forms which resolves the HJ. The cofactor is Mg(2+).

It localises to the cytoplasm. It carries out the reaction Endonucleolytic cleavage at a junction such as a reciprocal single-stranded crossover between two homologous DNA duplexes (Holliday junction).. In terms of biological role, the RuvA-RuvB-RuvC complex processes Holliday junction (HJ) DNA during genetic recombination and DNA repair. Endonuclease that resolves HJ intermediates. Cleaves cruciform DNA by making single-stranded nicks across the HJ at symmetrical positions within the homologous arms, yielding a 5'-phosphate and a 3'-hydroxyl group; requires a central core of homology in the junction. The consensus cleavage sequence is 5'-(A/T)TT(C/G)-3'. Cleavage occurs on the 3'-side of the TT dinucleotide at the point of strand exchange. HJ branch migration catalyzed by RuvA-RuvB allows RuvC to scan DNA until it finds its consensus sequence, where it cleaves and resolves the cruciform DNA. The protein is Crossover junction endodeoxyribonuclease RuvC of Aliarcobacter butzleri (strain RM4018) (Arcobacter butzleri).